Here is a 377-residue protein sequence, read N- to C-terminus: Serine protease inhibitor (377 aa).

The N-terminal stretch at M1–K27 is a signal peptide. Residue N301 is glycosylated (N-linked (GlcNAc...) asparagine). The RCL stretch occupies residues G328–R349. An N-linked (GlcNAc...) asparagine glycan is attached at N361.

This sequence belongs to the serpin family.

Inhibitor of serine proteases. Inhibits chymotrypsin, cathepsin G and human neutrophil elastase. In Cyanea capillata (Lion's mane jellyfish), this protein is Serine protease inhibitor.